A 1179-amino-acid polypeptide reads, in one-letter code: MEIMNNQNQCVPYNCLNDPTIEILEGERIETGYTPIDISLSLTQFLLSEFVPGAGFVLGLIDLIWGFVGPSQWDAFLVQIEQLINQRIEEFARNQAISRLEGLSNLYQIYAEAFREWEADPTNPALTEEMRIQFNDMNSALTTAIPLFTVQNYQVPLLSVYVQAANLHLSVLRDVSVFGQRWGFDVATINSRYNDLTRLIGTYTDYAVRWYNTGLERVWGPDSRDWVRYNQFRRELTLTVLDIVSLFPNYDSRTYPIRTVSQLTREIYTNPVLENFDGSFRGMAQRIEQNIRQPHLMDLLNSITIYTDVHRGFNYWSGHQITASPVGFAGPEFTFPRYGTMGNAAPPVLISTTGLGIFRTLSSPLYRRIILGSGPNNQNLFVLDGTEFSFASLTADLPSTIYRQRGTVDSLDVIPPQDNSVPARAGFSHRLSHVTMLSQAAGAVYTLRAPTFSWRHRSAEFSNLIPSSQITQIPLTKSINLGSGTSVVKGPGFTGGDILRITSPGQISTLRVTITAPLSQRYRVRIRYASTTNLQFHTSIDGRPINQGNFSATMSSGGNLQSGSFRTAGFTTPFNFSNGSSIFTLSAHVFNSGNEVYIERIEFVPAEVTFEAEYDLERAQEAVNALFTSSNQLGLKTNVTDYHIDQVSNLVECLSGEFCLDEKRELSEKVKHANRLSDERNLLQDPNFRGINRQPDRGWRGSTDITIQGGDDVFKENYVTLPGTFNECYPTYLYQKIDESKLKAYTRYQLRGYIEDSQHLEIYLIRYNTKHETVNVPGTGSLWPLSVENPIGKCGEPNRCAPQLEWNPDLDCSCRDGEKCAHHSHHFSLDIDIGCTDLNENLGVWVIFKIKMQDGHARLGNLEFLEEKPLVGESLARVKRAEKKWRDKREKLQVETNIVYKEAKESVDALFVNSQYDRLQADTDIAMIHAADKRVHRIREAYLPELSVIPGVNAGIFEELEGRIFTAYSLYDARNVIKNGDFNNGLSCWNVKGHVDVEEQNNHRSVLVVPEWEAEVSQEVRVCPGRGYILRVTAYKEGYGEGCVTIHEIEDNTDELKFSNCVEEEVYPNNTVTCNDYTANQEEYGGAYTSRNRGYGESYESNSSIPAEYAPVYEEAYIDGRKENPCESNRGYGDYTPLPAGYVTKELEYFPETDKVWIEIGETEGTFIVDSVELLLMEE.

The protein belongs to the delta endotoxin family.

In terms of biological role, promotes colloidosmotic lysis by binding to the midgut epithelial cells of many lepidopteran larvae. The chain is Pesticidal crystal protein Cry1Ad (cry1Ad) from Bacillus thuringiensis subsp. aizawai.